The sequence spans 147 residues: Large ribosomal subunit protein uL13 (147 aa).

It belongs to the universal ribosomal protein uL13 family. Part of the 50S ribosomal subunit.

This protein is one of the early assembly proteins of the 50S ribosomal subunit, although it is not seen to bind rRNA by itself. It is important during the early stages of 50S assembly. This is Large ribosomal subunit protein uL13 from Frankia casuarinae (strain DSM 45818 / CECT 9043 / HFP020203 / CcI3).